The following is a 305-amino-acid chain: Ornithine carbamoyltransferase, catabolic (305 aa).

Carbamoyl phosphate contacts are provided by residues 50–53 (STRT), Q77, R101, and 128–131 (HPLQ). Residues N159, D223, and 227-228 (SM) each bind L-ornithine. Carbamoyl phosphate contacts are provided by residues 263–264 (CL) and R291.

This sequence belongs to the aspartate/ornithine carbamoyltransferase superfamily. OTCase family.

It localises to the cytoplasm. It catalyses the reaction carbamoyl phosphate + L-ornithine = L-citrulline + phosphate + H(+). The protein operates within amino-acid degradation; L-arginine degradation via ADI pathway; carbamoyl phosphate from L-arginine: step 2/2. In terms of biological role, reversibly catalyzes the transfer of the carbamoyl group from carbamoyl phosphate (CP) to the N(epsilon) atom of ornithine (ORN) to produce L-citrulline. In Thermoplasma volcanium (strain ATCC 51530 / DSM 4299 / JCM 9571 / NBRC 15438 / GSS1), this protein is Ornithine carbamoyltransferase, catabolic.